A 312-amino-acid chain; its full sequence is MLQYQIDRIEHQIADDRSQTGVFLIGPLERGQATTLGNSLRRVLMGNLEGTAVTAVRIAGVNHEYATIPGVREDVLDILLNCKQITVNSRTSELEIGRLVVAGPATVKARDLQFSSQVQVVDGERAIATVGEGYSLELEVHVERGIGYRPVDRHNEDTSAIDLLQIDAVFMPVHRVNFTIDETAVAEGGSARERLRMEVVTDGSITPDDAIAQAANQLIELFQPLATVTMVEEVSAEPEPTAEAQIPLEELNLSVRAYNCLKRAQVNSVSDLMGFSYEDLLEIKNFGSKSADEVIEALERIGIQIPQSRTSA.

The segment at 1-229 is alpha N-terminal domain (alpha-NTD); the sequence is MLQYQIDRIE…ELFQPLATVT (229 aa). Residues 239 to 312 form an alpha C-terminal domain (alpha-CTD) region; it reads EPTAEAQIPL…IQIPQSRTSA (74 aa).

It belongs to the RNA polymerase alpha chain family. As to quaternary structure, in cyanobacteria the RNAP catalytic core is composed of 2 alpha, 1 beta, 1 beta', 1 gamma and 1 omega subunit. When a sigma factor is associated with the core the holoenzyme is formed, which can initiate transcription.

It carries out the reaction RNA(n) + a ribonucleoside 5'-triphosphate = RNA(n+1) + diphosphate. Its function is as follows. DNA-dependent RNA polymerase catalyzes the transcription of DNA into RNA using the four ribonucleoside triphosphates as substrates. In Synechococcus sp. (strain WH7803), this protein is DNA-directed RNA polymerase subunit alpha.